The following is a 347-amino-acid chain: Calcium homeostasis modulator protein 3 (347 aa).

The Cytoplasmic segment spans residues 1–20 (MDRFRMLFQHLQSSSESVMN). Residues 9–36 (QHLQSSSESVMNGICLLLAAVTVKIYSS) are central pore. The chain crosses the membrane as a helical span at residues 21–36 (GICLLLAAVTVKIYSS). The Extracellular portion of the chain corresponds to 37-48 (LDFNCPCLERYN). Disulfide bonds link Cys41-Cys126 and Cys43-Cys157. The chain crosses the membrane as a helical span at residues 49–71 (ALYGLGLLLTPPLALFLCGLLVN). Topologically, residues 72–98 (RQSVLMVEEWRRPAGHRRKDLGIIRYM) are cytoplasmic. Cys99 is lipidated: S-palmitoyl cysteine. Residues 99-124 (CSSVLQRALAAPLVWILLALLDGKCF) traverse the membrane as a helical segment. Residues 125-176 (VCAFSNSVDPEKFLDFANMTPRQVQLFLAKVPCKEDELVKNSPARKAVSRYL) lie on the Extracellular side of the membrane. Residue Asn142 is glycosylated (N-linked (GlcNAc...) asparagine). A helical membrane pass occupies residues 177 to 202 (RCLSQAIGWSITLLVIVVAFLARCLR). Residues Cys200 and Cys204 are each lipidated (S-palmitoyl cysteine). The Cytoplasmic portion of the chain corresponds to 203–347 (PCFDQTVFLQ…GTKLCHQLNV (145 aa)). A disordered region spans residues 265 to 290 (GGIPESQESSEPPELREDRDSGNGKA). Residues 277 to 286 (PELREDRDSG) show a composition bias toward basic and acidic residues.

It belongs to the CALHM family. Associates with CALHM1 as a pore-forming subunit in a hetero-hexameric channel complex. Post-translationally, N-glycosylated. Palmitoylated by ZDHHC3 and ZDHHC15. Palmitoylation positively regulates CALHM1:CALHM3 channel conductance. Expressed in taste bud cells.

The protein resides in the basolateral cell membrane. It carries out the reaction ATP(in) = ATP(out). The enzyme catalyses Ca(2+)(in) = Ca(2+)(out). It catalyses the reaction Na(+)(in) = Na(+)(out). The catalysed reaction is K(+)(in) = K(+)(out). It carries out the reaction chloride(in) = chloride(out). Its function is as follows. Pore-forming subunit of gustatory voltage-gated ion channels required for sensory perception of sweet, bitter and umami tastes. With CALHM1 forms a fast-activating voltage-gated ATP-release channel in type II taste bud cells, ATP acting as a neurotransmitter to activate afferent neural gustatory pathways. Acts both as a voltage-gated and calcium-activated ion channel: mediates neuronal excitability in response to membrane depolarization and low extracellular Ca(2+) concentration. Has poor ion selectivity and forms a wide pore (around 14 Angstroms) that mediates permeation of small ions including Ca(2+), Na(+), K(+) and Cl(-), as well as larger ions such as ATP(4-). This is Calcium homeostasis modulator protein 3 from Mus musculus (Mouse).